The sequence spans 214 residues: ATP phosphoribosyltransferase (214 aa).

It belongs to the ATP phosphoribosyltransferase family. Short subfamily. As to quaternary structure, heteromultimer composed of HisG and HisZ subunits.

The protein resides in the cytoplasm. The catalysed reaction is 1-(5-phospho-beta-D-ribosyl)-ATP + diphosphate = 5-phospho-alpha-D-ribose 1-diphosphate + ATP. The protein operates within amino-acid biosynthesis; L-histidine biosynthesis; L-histidine from 5-phospho-alpha-D-ribose 1-diphosphate: step 1/9. Its function is as follows. Catalyzes the condensation of ATP and 5-phosphoribose 1-diphosphate to form N'-(5'-phosphoribosyl)-ATP (PR-ATP). Has a crucial role in the pathway because the rate of histidine biosynthesis seems to be controlled primarily by regulation of HisG enzymatic activity. This Ruminiclostridium cellulolyticum (strain ATCC 35319 / DSM 5812 / JCM 6584 / H10) (Clostridium cellulolyticum) protein is ATP phosphoribosyltransferase.